Reading from the N-terminus, the 180-residue chain is Translation initiation factor IF-3 (180 aa).

Belongs to the IF-3 family. Monomer.

The protein resides in the cytoplasm. IF-3 binds to the 30S ribosomal subunit and shifts the equilibrium between 70S ribosomes and their 50S and 30S subunits in favor of the free subunits, thus enhancing the availability of 30S subunits on which protein synthesis initiation begins. The sequence is that of Translation initiation factor IF-3 from Salmonella typhi.